Here is a 57-residue protein sequence, read N- to C-terminus: MKPAVDEMFPEGAGPYVDLDEAGGSTGLLMDLAANEKAVHADFFNDFEDLFDDEDIQ.

This sequence belongs to the CSN9 family. Component of the CSN complex, probably composed of cops1, cops2, cops3, cops4, cops5, cops6, cops7, cops8 and cops9.

The protein resides in the nucleus. The protein localises to the cytoplasm. It localises to the nucleoplasm. Functionally, component of the COP9 signalosome complex (CSN), a complex involved in various cellular and developmental processes. The CSN complex is an essential regulator of the ubiquitin (Ubl) conjugation pathway by mediating the deneddylation of the cullin subunits of SCF-type E3 ligase complexes, leading to decrease the Ubl ligase activity. May play a role in cell proliferation. The polypeptide is COP9 signalosome complex subunit 9 (Xenopus tropicalis (Western clawed frog)).